The primary structure comprises 507 residues: E3 ubiquitin-protein ligase makorin-3 (507 aa).

The segment covering 1 to 21 (MEEPAAPSEAHEAAGAQAGAE) has biased composition (low complexity). Disordered regions lie at residues 1 to 48 (MEEP…DSAL) and 69 to 89 (RGGL…PLPS). The C3H1-type 1 zinc finger occupies 95 to 122 (WTKQIICRYYIHGQCKEGENCRYSHDLS). Residues 126-149 (MATEGGVSPPGASAGGGPSTAAHI) form a disordered region. The C3H1-type 2 zinc finger occupies 238–265 (GSGLRFCYYASRGVCFRGESCMYLHGDI). The segment at 266 to 293 (CDMCGLQTLHPMDAAQREEHMRACIEAH) is makorin-type Cys-His. An RING-type zinc finger spans residues 311–365 (CGICMEVVYEKANPNDRRFGILSNCNHSFCIRCIRRWRSARQFENRIVKSCPQCR). The C3H1-type 3 zinc finger occupies 394-423 (AMSNKACRYFAEGRGNCPFGDTCFYKHEYP).

As to expression, ubiquitous.

It localises to the nucleus. It carries out the reaction S-ubiquitinyl-[E2 ubiquitin-conjugating enzyme]-L-cysteine + [acceptor protein]-L-lysine = [E2 ubiquitin-conjugating enzyme]-L-cysteine + N(6)-ubiquitinyl-[acceptor protein]-L-lysine.. Its pathway is protein modification; protein ubiquitination. Its function is as follows. E3 ubiquitin ligase catalyzing the covalent attachment of ubiquitin moieties onto substrate proteins. Acts as a key developmental timer that helps ensure puberty begins at the appropriate age, by inhibiting premature activation of the reproductive hormone cascade. Epigenetically regulates GNRH1 transcription by disrupting the binding of methyl-DNA binding protein 3/MBD3 to the promoter of GNRH1. Mechanistically, mediates the non-proteolytic ubiquitination of MBD3 at multiple sites with 'Lys27' ubiquitin linkages and thereby regulates the methylation status of the genome, including GNRH1 promoter. Modulates the stability and translation of GNRH1 mRNA by mediating the non-proteolytic ubiquitination of PABP family members PABPC1, PABPC3 and PABPC4 at multiple sites. Also participates in the maintenance of genomic and epigenomic stability by regulating the abundance of APEX2 via 'Lys-48'-linked ubiquitination. This Homo sapiens (Human) protein is E3 ubiquitin-protein ligase makorin-3 (MKRN3).